The chain runs to 115 residues: NADH-ubiquinone oxidoreductase chain 3 (115 aa).

A run of 3 helical transmembrane segments spans residues 3–23 (LIMVISINIILSSILILVAFW), 55–75 (FFLVAITFLLFDLEIALLLPI), and 84–104 (INTMLLAAFILVSILALGLAY).

The protein belongs to the complex I subunit 3 family. As to quaternary structure, core subunit of respiratory chain NADH dehydrogenase (Complex I) which is composed of 45 different subunits. Interacts with TMEM186. Interacts with TMEM242.

The protein resides in the mitochondrion inner membrane. It carries out the reaction a ubiquinone + NADH + 5 H(+)(in) = a ubiquinol + NAD(+) + 4 H(+)(out). In terms of biological role, core subunit of the mitochondrial membrane respiratory chain NADH dehydrogenase (Complex I) which catalyzes electron transfer from NADH through the respiratory chain, using ubiquinone as an electron acceptor. Essential for the catalytic activity of complex I. In Scotinomys teguina (Alston's brown mouse), this protein is NADH-ubiquinone oxidoreductase chain 3.